Here is a 210-residue protein sequence, read N- to C-terminus: MSIVVKKWKELAEVKAELAARDWFFATSGNLSIKVTDDPLTFLVTASGKDKRKQTDEDFLLVDAAGKPAEETNLKPSAETLLHAEIYGRTNAGCVLHVHTVDNNLISELYAQNGEAVFSGQEIIKAFGIWEENAAVRIPIIDNYADIPTLAREFANYIHGDAGAVLIQNHGITVWGRTAFEAKKHLEAWEFLFRWQVKRLLLQRAGLPVG.

Zn(2+) contacts are provided by histidine 97 and histidine 99.

This sequence belongs to the aldolase class II family. MtnB subfamily. Homotetramer. It depends on Zn(2+) as a cofactor.

It carries out the reaction 5-(methylsulfanyl)-D-ribulose 1-phosphate = 5-methylsulfanyl-2,3-dioxopentyl phosphate + H2O. It participates in amino-acid biosynthesis; L-methionine biosynthesis via salvage pathway; L-methionine from S-methyl-5-thio-alpha-D-ribose 1-phosphate: step 2/6. Catalyzes the dehydration of methylthioribulose-1-phosphate (MTRu-1-P) into 2,3-diketo-5-methylthiopentyl-1-phosphate (DK-MTP-1-P). This Geobacillus kaustophilus (strain HTA426) protein is Methylthioribulose-1-phosphate dehydratase.